The primary structure comprises 247 residues: ATP synthase subunit a, chloroplastic (247 aa).

Helical transmembrane passes span 38–58, 95–115, 134–154, 199–219, and 220–240; these read QVLI…ILVV, VPFI…GALL, INTT…AGIS, LVVV…VMFL, and GLFT…AYIG.

It belongs to the ATPase A chain family. As to quaternary structure, F-type ATPases have 2 components, CF(1) - the catalytic core - and CF(0) - the membrane proton channel. CF(1) has five subunits: alpha(3), beta(3), gamma(1), delta(1), epsilon(1). CF(0) has four main subunits: a, b, b' and c.

It localises to the plastid. Its subcellular location is the chloroplast thylakoid membrane. In terms of biological role, key component of the proton channel; it plays a direct role in the translocation of protons across the membrane. In Pisum sativum (Garden pea), this protein is ATP synthase subunit a, chloroplastic.